The chain runs to 590 residues: Aspartate--tRNA(Asp/Asn) ligase (590 aa).

L-aspartate is bound at residue Glu175. The interval Gln199–Lys202 is aspartate. L-aspartate is bound by residues Arg221 and His452. ATP is bound at residue Arg221–Glu223. Glu485 serves as a coordination point for ATP. Arg492 contributes to the L-aspartate binding site. Gly537–Arg540 lines the ATP pocket.

Belongs to the class-II aminoacyl-tRNA synthetase family. Type 1 subfamily. Homodimer.

Its subcellular location is the cytoplasm. The enzyme catalyses tRNA(Asx) + L-aspartate + ATP = L-aspartyl-tRNA(Asx) + AMP + diphosphate. Functionally, aspartyl-tRNA synthetase with relaxed tRNA specificity since it is able to aspartylate not only its cognate tRNA(Asp) but also tRNA(Asn). Reaction proceeds in two steps: L-aspartate is first activated by ATP to form Asp-AMP and then transferred to the acceptor end of tRNA(Asp/Asn). The polypeptide is Aspartate--tRNA(Asp/Asn) ligase (Dinoroseobacter shibae (strain DSM 16493 / NCIMB 14021 / DFL 12)).